The following is a 494-amino-acid chain: Cobyric acid synthase (494 aa).

The GATase cobBQ-type domain maps to 248–445; sequence ELEIAVLKLP…LHGIFDNGPW (198 aa). The active-site Nucleophile is cysteine 329. The active site involves histidine 437.

The protein belongs to the CobB/CobQ family. CobQ subfamily.

The protein operates within cofactor biosynthesis; adenosylcobalamin biosynthesis. Functionally, catalyzes amidations at positions B, D, E, and G on adenosylcobyrinic A,C-diamide. NH(2) groups are provided by glutamine, and one molecule of ATP is hydrogenolyzed for each amidation. The sequence is that of Cobyric acid synthase from Synechococcus sp. (strain WH7803).